The following is a 520-amino-acid chain: Ribonuclease Y (520 aa).

Topologically, residues 1-3 (MTP) are extracellular. A helical membrane pass occupies residues 4–24 (IMMVLISILLILLGLVVGYFV). Over 25-520 (RKTIAEAKIA…RETRAVEYAK (496 aa)) the chain is Cytoplasmic. Positions 29–141 (AEAKIAGARG…KVDEMIRMQQ (113 aa)) form a coiled coil. Positions 210-273 (TVSVVNLPND…ETARIALDKL (64 aa)) constitute a KH domain. Residues 336 to 429 (VLKHSMEVAF…VAAADALSAA (94 aa)) enclose the HD domain.

It belongs to the RNase Y family. As to quaternary structure, homodimer. Component of a possible RNA degradosome complex composed of rny, rnjA, rnjB, pnp, pfkA and eno (although rnjA and rnjB's presence is unclear). Interacts with RNA helicase CshA which may also be a member of the RNA degradosome complex. Interacts with full-length dynamin-like protein DynA. Requires Mg(2+) as cofactor. Mn(2+) is required as a cofactor. Zn(2+) serves as cofactor.

The protein resides in the cell membrane. Its activity is regulated as follows. Shows preference for transcripts carrying a monophosphate group at the 5' end. Its function is as follows. Endoribonuclease that initiates mRNA decay. Initiates the decay of all SAM-dependent riboswitches, such as yitJ riboswitch. Involved in processing of the gapA operon mRNA, it cleaves between cggR and gapA. Is also the decay-initiating endonuclease for rpsO mRNA. Involved in degradation of type I toxin-antitoxin system bsrG/SR4 RNAs and a minor role in degradation of type I toxin-antitoxin system bsrE/SR5 degradation. This is Ribonuclease Y (rny) from Bacillus subtilis (strain 168).